The primary structure comprises 93 residues: Putative aspartate aminotransferase (93 aa).

Belongs to the class-I pyridoxal-phosphate-dependent aminotransferase family. In terms of assembly, homodimer. Pyridoxal 5'-phosphate serves as cofactor.

Its subcellular location is the cytoplasm. It catalyses the reaction L-aspartate + 2-oxoglutarate = oxaloacetate + L-glutamate. This is Putative aspartate aminotransferase from Methylorubrum extorquens (Methylobacterium dichloromethanicum).